The following is a 259-amino-acid chain: Dihydroorotate dehydrogenase B (NAD(+)), electron transfer subunit (259 aa).

Residues 2–102 form the FAD-binding FR-type domain; sequence MQKQNMIVVN…LGPLGHGFPV (101 aa). Residues 53–56, 70–72, and 77–78 contribute to the FAD site; these read RPIS, LYR, and GT. Cys-221, Cys-226, Cys-229, and Cys-246 together coordinate [2Fe-2S] cluster.

This sequence belongs to the PyrK family. In terms of assembly, heterotetramer of 2 PyrK and 2 PyrD type B subunits. The cofactor is [2Fe-2S] cluster. Requires FAD as cofactor.

The protein operates within pyrimidine metabolism; UMP biosynthesis via de novo pathway; orotate from (S)-dihydroorotate (NAD(+) route): step 1/1. Responsible for channeling the electrons from the oxidation of dihydroorotate from the FMN redox center in the PyrD type B subunit to the ultimate electron acceptor NAD(+). This Bacillus cereus (strain 03BB102) protein is Dihydroorotate dehydrogenase B (NAD(+)), electron transfer subunit.